Reading from the N-terminus, the 78-residue chain is Acyl carrier protein (78 aa).

Residues 2–77 (DELFLRMRAL…DAYEFIKSKV (76 aa)) enclose the Carrier domain. An O-(pantetheine 4'-phosphoryl)serine modification is found at Ser-37.

It belongs to the acyl carrier protein (ACP) family. In terms of processing, 4'-phosphopantetheine is transferred from CoA to a specific serine of apo-ACP by AcpS. This modification is essential for activity because fatty acids are bound in thioester linkage to the sulfhydryl of the prosthetic group.

It localises to the cytoplasm. Its pathway is lipid metabolism; fatty acid biosynthesis. Functionally, carrier of the growing fatty acid chain in fatty acid biosynthesis. This is Acyl carrier protein from Treponema pallidum (strain Nichols).